A 330-amino-acid chain; its full sequence is T-cell surface glycoprotein CD1b4 (330 aa).

The signal sequence occupies residues 1-15 (MLLLALAFFFPAGDT). Residues 16-299 (QNVLPGKISF…LYWGHSISIG (284 aa)) lie on the Extracellular side of the membrane. N-linked (GlcNAc...) asparagine glycosylation is found at Asn35, Asn72, and Asn143. 2 cysteine pairs are disulfide-bonded: Cys117-Cys181 and Cys221-Cys276. The Ig-like domain occupies 182-292 (PRYLMSVIEA…LEGQDIILYW (111 aa)). A helical membrane pass occupies residues 300–320 (WIILAVLVPCLIVLVLFILWF). Residues 321-330 (YRRWSYEDIF) are Cytoplasmic-facing. Residues 326 to 329 (YEDI) carry the Internalization signal motif.

As to quaternary structure, heterodimer with B2M (beta-2-microglobulin). Interacts with saposin C.

The protein localises to the cell membrane. It is found in the endosome membrane. It localises to the lysosome membrane. Antigen-presenting protein that binds self and non-self lipid and glycolipid antigens and presents them to T-cell receptors on natural killer T-cells. The sequence is that of T-cell surface glycoprotein CD1b4 (CD1B4) from Cavia porcellus (Guinea pig).